Reading from the N-terminus, the 342-residue chain is Dihydroorotase (342 aa).

Zn(2+) is bound by residues His13 and His15. Substrate-binding positions include 15–17 (HLR) and Asn41. 3 residues coordinate Zn(2+): Lys98, His135, and His173. Residue Lys98 is modified to N6-carboxylysine. His135 lines the substrate pocket. A substrate-binding site is contributed by Leu218. Zn(2+) is bound at residue Asp246. Asp246 is an active-site residue. Residues His250 and Ala262 each contribute to the substrate site.

Belongs to the metallo-dependent hydrolases superfamily. DHOase family. Class II DHOase subfamily. In terms of assembly, homodimer. The cofactor is Zn(2+).

The enzyme catalyses (S)-dihydroorotate + H2O = N-carbamoyl-L-aspartate + H(+). Its pathway is pyrimidine metabolism; UMP biosynthesis via de novo pathway; (S)-dihydroorotate from bicarbonate: step 3/3. Functionally, catalyzes the reversible cyclization of carbamoyl aspartate to dihydroorotate. The protein is Dihydroorotase of Vibrio parahaemolyticus serotype O3:K6 (strain RIMD 2210633).